Consider the following 117-residue polypeptide: Photosystem II reaction center Psb28 protein (117 aa).

This sequence belongs to the Psb28 family. As to quaternary structure, part of the photosystem II complex.

Its subcellular location is the cellular thylakoid membrane. This Prochlorococcus marinus (strain MIT 9211) protein is Photosystem II reaction center Psb28 protein.